We begin with the raw amino-acid sequence, 27 residues long: Metalloproteinase inhibitor 1 (27 aa).

The segment covering 1–12 has biased composition (acidic residues); sequence IEPERQEEEEEE. Residues 1-27 are disordered; the sequence is IEPERQEEEEEETRQRVRRGQVRQQQQ.

Its function is as follows. Metalloproteinase inhibitor, active on a globulinase from L.albus seeds, thermolysin and gelatinase B. This is Metalloproteinase inhibitor 1 from Lupinus albus (White lupine).